A 174-amino-acid chain; its full sequence is Crossover junction endodeoxyribonuclease RuvC (174 aa).

Residues aspartate 8, glutamate 67, and aspartate 139 contribute to the active site. The Mg(2+) site is built by aspartate 8, glutamate 67, and aspartate 139.

Belongs to the RuvC family. Homodimer which binds Holliday junction (HJ) DNA. The HJ becomes 2-fold symmetrical on binding to RuvC with unstacked arms; it has a different conformation from HJ DNA in complex with RuvA. In the full resolvosome a probable DNA-RuvA(4)-RuvB(12)-RuvC(2) complex forms which resolves the HJ. Mg(2+) serves as cofactor.

The protein localises to the cytoplasm. The catalysed reaction is Endonucleolytic cleavage at a junction such as a reciprocal single-stranded crossover between two homologous DNA duplexes (Holliday junction).. In terms of biological role, the RuvA-RuvB-RuvC complex processes Holliday junction (HJ) DNA during genetic recombination and DNA repair. Endonuclease that resolves HJ intermediates. Cleaves cruciform DNA by making single-stranded nicks across the HJ at symmetrical positions within the homologous arms, yielding a 5'-phosphate and a 3'-hydroxyl group; requires a central core of homology in the junction. The consensus cleavage sequence is 5'-(A/T)TT(C/G)-3'. Cleavage occurs on the 3'-side of the TT dinucleotide at the point of strand exchange. HJ branch migration catalyzed by RuvA-RuvB allows RuvC to scan DNA until it finds its consensus sequence, where it cleaves and resolves the cruciform DNA. The polypeptide is Crossover junction endodeoxyribonuclease RuvC (Pseudomonas putida (strain ATCC 700007 / DSM 6899 / JCM 31910 / BCRC 17059 / LMG 24140 / F1)).